A 364-amino-acid chain; its full sequence is Fructose-bisphosphate aldolase B (364 aa).

N-acetylalanine is present on Ala2. Lys13 carries the N6-succinyllysine modification. Ser36 is modified (phosphoserine). The residue at position 39 (Thr39) is a Phosphothreonine. A beta-D-fructose 1,6-bisphosphate-binding site is contributed by Arg43. Ser89 is subject to Phosphoserine. Thr119 is modified (phosphothreonine). The residue at position 121 (Lys121) is an N6-succinyllysine. Ser132 is subject to Phosphoserine. Catalysis depends on Glu188, which acts as the Proton acceptor. Lys230 serves as the catalytic Schiff-base intermediate with dihydroxyacetone-P. A phosphoserine mark is found at Ser272, Ser276, Ser299, and Ser301. 272-274 (SGG) is a binding site for beta-D-fructose 1,6-bisphosphate. Arg304 is a beta-D-fructose 1,6-bisphosphate binding site. At Ser309 the chain carries Phosphoserine. Lys317 carries the N6-succinyllysine modification.

It belongs to the class I fructose-bisphosphate aldolase family. Homotetramer. Interacts with BBS1, BBS2, BBS4 and BBS7. Forms a ternary complex with G6PD and TP53; this interaction is direct.

It is found in the cytoplasm. It localises to the cytosol. The protein resides in the cytoskeleton. Its subcellular location is the microtubule organizing center. The protein localises to the centrosome. It is found in the centriolar satellite. It carries out the reaction beta-D-fructose 1,6-bisphosphate = D-glyceraldehyde 3-phosphate + dihydroxyacetone phosphate. The catalysed reaction is beta-D-fructose 1-phosphate = D-glyceraldehyde + dihydroxyacetone phosphate. It functions in the pathway carbohydrate degradation; glycolysis; D-glyceraldehyde 3-phosphate and glycerone phosphate from D-glucose: step 4/4. The protein operates within carbohydrate biosynthesis; gluconeogenesis. It participates in carbohydrate metabolism; fructose metabolism. Functionally, catalyzes the aldol cleavage of fructose 1,6-biphosphate to form two triosephosphates dihydroxyacetone phosphate and D-glyceraldehyde 3-phosphate in glycolysis as well as the reverse stereospecific aldol addition reaction in gluconeogenesis. In fructolysis, metabolizes fructose 1-phosphate derived from the phosphorylation of dietary fructose by fructokinase into dihydroxyacetone phosphate and D-glyceraldehyde. Acts as an adapter independently of its enzymatic activity, exerts a tumor suppressor role by stabilizing the ternary complex with G6PD and TP53 to inhibit G6PD activity and keep oxidative pentose phosphate metabolism in check. This Oryctolagus cuniculus (Rabbit) protein is Fructose-bisphosphate aldolase B (ALDOB).